The primary structure comprises 800 residues: Phenylalanine--tRNA ligase beta subunit (800 aa).

Positions 39–154 (TKDIKNLVVG…EAQVPGTDAL (116 aa)) constitute a tRNA-binding domain. In terms of domain architecture, B5 spans 408-483 (AFITPIDITA…RIYGYDDIPS (76 aa)). 4 residues coordinate Mg(2+): D461, D467, E470, and E471. The region spanning 708 to 800 (PRFPGMSRDI…ALIEQGAVIR (93 aa)) is the FDX-ACB domain.

This sequence belongs to the phenylalanyl-tRNA synthetase beta subunit family. Type 1 subfamily. Tetramer of two alpha and two beta subunits. Mg(2+) is required as a cofactor.

The protein resides in the cytoplasm. The enzyme catalyses tRNA(Phe) + L-phenylalanine + ATP = L-phenylalanyl-tRNA(Phe) + AMP + diphosphate + H(+). In Staphylococcus aureus (strain COL), this protein is Phenylalanine--tRNA ligase beta subunit.